We begin with the raw amino-acid sequence, 259 residues long: 3-deoxy-manno-octulosonate cytidylyltransferase (259 aa).

Belongs to the KdsB family.

The protein resides in the cytoplasm. The catalysed reaction is 3-deoxy-alpha-D-manno-oct-2-ulosonate + CTP = CMP-3-deoxy-beta-D-manno-octulosonate + diphosphate. The protein operates within nucleotide-sugar biosynthesis; CMP-3-deoxy-D-manno-octulosonate biosynthesis; CMP-3-deoxy-D-manno-octulosonate from 3-deoxy-D-manno-octulosonate and CTP: step 1/1. It functions in the pathway bacterial outer membrane biogenesis; lipopolysaccharide biosynthesis. Activates KDO (a required 8-carbon sugar) for incorporation into bacterial lipopolysaccharide in Gram-negative bacteria. The chain is 3-deoxy-manno-octulosonate cytidylyltransferase from Xanthomonas euvesicatoria pv. vesicatoria (strain 85-10) (Xanthomonas campestris pv. vesicatoria).